Reading from the N-terminus, the 215-residue chain is UPF0502 protein Gbem_0102 (215 aa).

The protein belongs to the UPF0502 family.

The protein is UPF0502 protein Gbem_0102 of Citrifermentans bemidjiense (strain ATCC BAA-1014 / DSM 16622 / JCM 12645 / Bem) (Geobacter bemidjiensis).